Consider the following 122-residue polypeptide: Large ribosomal subunit protein uL18 (122 aa).

This sequence belongs to the universal ribosomal protein uL18 family. As to quaternary structure, part of the 50S ribosomal subunit; part of the 5S rRNA/L5/L18/L25 subcomplex. Contacts the 5S and 23S rRNAs.

Functionally, this is one of the proteins that bind and probably mediate the attachment of the 5S RNA into the large ribosomal subunit, where it forms part of the central protuberance. This chain is Large ribosomal subunit protein uL18, found in Leptospira biflexa serovar Patoc (strain Patoc 1 / Ames).